Reading from the N-terminus, the 263-residue chain is MPTSIKAIKESLEAVTSLLDPLFQELATDTRSGVQKALKSRQKVIQAELAEEERLEAMLSYEKALYKKGYKAIAGIDEVGRGPLAGPVVAACVILPKYCKIKGLNDSKKIPKAKHETIYQAVKEKALAIGIGIIDNQLIDEVNIYEATKLAMLEAIKQLEGQLTQPDYLLIDAMTLDIAISQQSILKGDANSLSIAAASIVAKVTRDQMMANYDRIFPGYDFAKNAGYGTKEHLQGLKAYGITPIHRKSFEPVKSMCCDSTNP.

The 192-residue stretch at 71–262 (KAIAGIDEVG…VKSMCCDSTN (192 aa)) folds into the RNase H type-2 domain. A divalent metal cation is bound by residues Asp-77, Glu-78, and Asp-172.

The protein belongs to the RNase HII family. Mn(2+) is required as a cofactor. The cofactor is Mg(2+).

It localises to the cytoplasm. It catalyses the reaction Endonucleolytic cleavage to 5'-phosphomonoester.. Endonuclease that specifically degrades the RNA of RNA-DNA hybrids. The polypeptide is Ribonuclease HII (Streptococcus pyogenes serotype M1).